The following is a 395-amino-acid chain: Acid ceramidase (395 aa).

The N-terminal stretch at 1–21 (MLGRSRLTFVLLAAAVTCAEA) is a signal peptide. Cys31 and Cys340 are joined by a disulfide. Cys143 acts as the Nucleophile in catalysis. N-linked (GlcNAc...) asparagine glycosylation is found at Asn173, Asn259, Asn286, and Asn348. Cys388 and Cys392 are disulfide-bonded.

The protein belongs to the acid ceramidase family. Heterodimer; disulfide-linked. The heterodimer is composed of the disulfide-linked alpha and beta chains produced by autocatalytic cleavage of the precursor. In terms of processing, N-glycosylated. Post-translationally, proteolytically cleaved into two chains alpha and beta that remain associated via a disulfide bond. Cleavage gives rise to a conformation change that activates the enzyme. The same catalytic Cys residue mediates the autoproteolytic cleavage and subsequent hydrolysis of lipid substrates. The beta chain may undergo an additional C-terminal processing.

The protein localises to the lysosome. The protein resides in the secreted. The catalysed reaction is an N-acylsphing-4-enine + H2O = sphing-4-enine + a fatty acid. It catalyses the reaction N-dodecanoylsphing-4-enine + H2O = dodecanoate + sphing-4-enine. It carries out the reaction N-tetradecanoylsphing-4-enine + H2O = tetradecanoate + sphing-4-enine. The enzyme catalyses N-hexadecanoylsphing-4-enine + H2O = sphing-4-enine + hexadecanoate. The catalysed reaction is N-octadecanoylsphing-4-enine + H2O = sphing-4-enine + octadecanoate. It catalyses the reaction N-dodecanoyl-(4R)-hydroxysphinganine + H2O = (4R)-hydroxysphinganine + dodecanoate. It carries out the reaction N-(dodecanoyl)-sphinganine + H2O = dodecanoate + sphinganine. The enzyme catalyses N-(acetyl)-sphing-4-enine + H2O = sphing-4-enine + acetate. The catalysed reaction is N-(hexanoyl)sphing-4-enine + H2O = hexanoate + sphing-4-enine. It catalyses the reaction N-octanoylsphing-4-enine + H2O = octanoate + sphing-4-enine. It carries out the reaction N-(9Z-octadecenoyl)-sphing-4-enine + H2O = sphing-4-enine + (9Z)-octadecenoate. The enzyme catalyses N-dodecanoylethanolamine + H2O = dodecanoate + ethanolamine. It participates in lipid metabolism; sphingolipid metabolism. In terms of biological role, lysosomal ceramidase that hydrolyzes sphingolipid ceramides into sphingosine and free fatty acids at acidic pH. Ceramides, sphingosine, and its phosphorylated form sphingosine-1-phosphate are bioactive lipids that mediate cellular signaling pathways regulating several biological processes including cell proliferation, apoptosis and differentiation. Has a higher catalytic efficiency towards C12-ceramides versus other ceramides. Also catalyzes the reverse reaction allowing the synthesis of ceramides from fatty acids and sphingosine. For the reverse synthetic reaction, the natural sphingosine D-erythro isomer is more efficiently utilized as a substrate compared to D-erythro-dihydrosphingosine and D-erythro-phytosphingosine, while the fatty acids with chain lengths of 12 or 14 carbons are the most efficiently used. Also has an N-acylethanolamine hydrolase activity. By regulating the levels of ceramides, sphingosine and sphingosine-1-phosphate in the epidermis, mediates the calcium-induced differentiation of epidermal keratinocytes. Also indirectly regulates tumor necrosis factor/TNF-induced apoptosis. By regulating the intracellular balance between ceramides and sphingosine, in adrenocortical cells, probably also acts as a regulator of steroidogenesis. This Heterocephalus glaber (Naked mole rat) protein is Acid ceramidase.